The sequence spans 337 residues: Tetraacyldisaccharide 4'-kinase (337 aa).

Position 58-65 (58-65) interacts with ATP; sequence TVGGSGKT.

Belongs to the LpxK family.

The enzyme catalyses a lipid A disaccharide + ATP = a lipid IVA + ADP + H(+). It functions in the pathway glycolipid biosynthesis; lipid IV(A) biosynthesis; lipid IV(A) from (3R)-3-hydroxytetradecanoyl-[acyl-carrier-protein] and UDP-N-acetyl-alpha-D-glucosamine: step 6/6. Functionally, transfers the gamma-phosphate of ATP to the 4'-position of a tetraacyldisaccharide 1-phosphate intermediate (termed DS-1-P) to form tetraacyldisaccharide 1,4'-bis-phosphate (lipid IVA). This Shewanella putrefaciens (strain CN-32 / ATCC BAA-453) protein is Tetraacyldisaccharide 4'-kinase.